The sequence spans 323 residues: Synaptonemal complex central element protein 1 (323 aa).

Residues Met1–Ala10 are compositionally biased toward polar residues. Disordered regions lie at residues Met1–Lys31 and Lys294–Lys323. Composition is skewed to basic and acidic residues over residues Asp20–Lys31 and Ser313–Lys323. The stretch at Gln25–Gln290 forms a coiled coil.

This sequence belongs to the SYCE family. Homodimer. Found in a complex with SYCP1 and SYCE2. Interacts with SYCP1, SYCE2 and SYCE3. Interacts with SIX6OS1.

It is found in the nucleus. The protein resides in the chromosome. In terms of biological role, major component of the transverse central element of synaptonemal complexes (SCS), formed between homologous chromosomes during meiotic prophase. Requires SYCP1 in order to be incorporated into the central element. May have a role in the synaptonemal complex assembly, stabilization and recombination. This Bos taurus (Bovine) protein is Synaptonemal complex central element protein 1 (SYCE1).